We begin with the raw amino-acid sequence, 70 residues long: Large ribosomal subunit protein bL31 (70 aa).

Zn(2+) is bound by residues C16, C18, C37, and C40.

The protein belongs to the bacterial ribosomal protein bL31 family. Type A subfamily. In terms of assembly, part of the 50S ribosomal subunit. It depends on Zn(2+) as a cofactor.

Binds the 23S rRNA. This chain is Large ribosomal subunit protein bL31, found in Colwellia psychrerythraea (strain 34H / ATCC BAA-681) (Vibrio psychroerythus).